The following is a 422-amino-acid chain: 26S proteasome non-ATPase regulatory subunit 11 (422 aa).

Alanine 2 carries the post-translational modification N-acetylalanine. Phosphoserine is present on residues serine 14 and serine 23. One can recognise a PCI domain in the interval 224-392 (DWKTAYSYFY…GVLIIFDEPP (169 aa)). Lysine 274 participates in a covalent cross-link: Glycyl lysine isopeptide (Lys-Gly) (interchain with G-Cter in SUMO2).

Belongs to the proteasome subunit S9 family. Component of the 19S proteasome regulatory particle complex. The 26S proteasome consists of a 20S core particle (CP) and two 19S regulatory subunits (RP). The regulatory particle is made of a lid composed of 9 subunits including PSMD11, a base containing 6 ATPases and few additional components. In terms of processing, phosphorylated by AMPK.

It localises to the nucleus. Its subcellular location is the cytoplasm. The protein localises to the cytosol. Its function is as follows. Component of the 26S proteasome, a multiprotein complex involved in the ATP-dependent degradation of ubiquitinated proteins. This complex plays a key role in the maintenance of protein homeostasis by removing misfolded or damaged proteins, which could impair cellular functions, and by removing proteins whose functions are no longer required. Therefore, the proteasome participates in numerous cellular processes, including cell cycle progression, apoptosis, or DNA damage repair. In the complex, PSMD11 is required for proteasome assembly. Plays a key role in increased proteasome activity in embryonic stem cells (ESCs): its high expression in ESCs promotes enhanced assembly of the 26S proteasome, followed by higher proteasome activity. This chain is 26S proteasome non-ATPase regulatory subunit 11 (PSMD11), found in Bos taurus (Bovine).